The chain runs to 180 residues: Cytochrome b6-f complex subunit 4 (180 aa).

A run of 3 helical transmembrane segments spans residues 36 to 56 (LSYIFPVVILGTIACTIGLAV), 95 to 115 (LLGVLLMGSVPAGSLTVPFLE), and 131 to 151 (TVSLIGTAVALWLGIGAALPI).

The protein belongs to the cytochrome b family. PetD subfamily. The 4 large subunits of the cytochrome b6-f complex are cytochrome b6, subunit IV (17 kDa polypeptide, petD), cytochrome f and the Rieske protein, while the 4 small subunits are petG, petL, petM and petN. The complex functions as a dimer.

Its subcellular location is the plastid. The protein resides in the chloroplast thylakoid membrane. Functionally, component of the cytochrome b6-f complex, which mediates electron transfer between photosystem II (PSII) and photosystem I (PSI), cyclic electron flow around PSI, and state transitions. This is Cytochrome b6-f complex subunit 4 from Pinus thunbergii (Japanese black pine).